Consider the following 223-residue polypeptide: Killer cell lectin-like receptor subfamily B member 1B allele B (223 aa).

Over 1–43 (MDSTTLVYADLNLARIQEPKHDSPPSLSPDTCRCPRWHRLALK) the chain is Cytoplasmic. Positions 6–11 (LVYADL) match the ITIM motif motif. An LCK-binding motif motif is present at residues 32–35 (CRCP). The chain crosses the membrane as a helical; Signal-anchor for type II membrane protein span at residues 44-64 (FGCAGLILLVLVVIGLCVLVL). Topologically, residues 65-223 (SVQKSSVQKI…LNHETPCNDS (159 aa)) are extracellular. In terms of domain architecture, C-type lectin spans 101-211 (HRDKCFHVSQ…CSSDNRWICQ (111 aa)). Disulfide bonds link cysteine 122–cysteine 210 and cysteine 189–cysteine 202.

Homodimer; disulfide-linked. Interacts with tyrosine kinase LCK. Binds PTPN6/SHP-1 in a phosphorylation-dependent manner. In terms of tissue distribution, expressed in NK cells and a subset of T-cells.

Its subcellular location is the membrane. In terms of biological role, receptor for CLEC2D/OCIL. Ligand-binding contributes to inhibition of cytotoxic natural killer (NK) cells. May mediate MHC class I-independent 'missing-self' recognition of allografts, tumor cells and virus-infected cells. The chain is Killer cell lectin-like receptor subfamily B member 1B allele B (Klrb1b) from Mus musculus (Mouse).